Reading from the N-terminus, the 487-residue chain is Cytochrome P450 2C21 (487 aa).

Position 432 (C432) interacts with heme.

The protein belongs to the cytochrome P450 family. Heme is required as a cofactor. In terms of tissue distribution, liver.

The protein resides in the endoplasmic reticulum membrane. It is found in the microsome membrane. The enzyme catalyses an organic molecule + reduced [NADPH--hemoprotein reductase] + O2 = an alcohol + oxidized [NADPH--hemoprotein reductase] + H2O + H(+). In terms of biological role, cytochromes P450 are a group of heme-thiolate monooxygenases. In liver microsomes, this enzyme is involved in an NADPH-dependent electron transport pathway. It oxidizes a variety of structurally unrelated compounds, including steroids, fatty acids, and xenobiotics. Showed testosterone hydrolase activity. The sequence is that of Cytochrome P450 2C21 (CYP2C21) from Canis lupus familiaris (Dog).